Reading from the N-terminus, the 1133-residue chain is Sterol regulatory element-binding protein 1 (1133 aa).

Positions 1–60 are transcriptional activation (acidic); that stretch reads MDELPFGEAAVEQALDELGELDAALLTDIQDMLQLINNQDSDFPGLFDSPYAGGGAGDTE. The Cytoplasmic segment spans residues 1–476; the sequence is MDELPFGEAA…HSHGMLDRSR (476 aa). The short motif at 27–35 is the 9aaTAD element; it reads TDIQDMLQL. The segment at 46–78 is disordered; sequence LFDSPYAGGGAGDTEPTSPGANSPESLSSPASL. A compositionally biased stretch (low complexity) spans 68-78; the sequence is SPESLSSPASL. A phosphoserine mark is found at serine 97 and serine 116. The disordered stretch occupies residues 131-219; sequence LQPPAAQPSP…PLPASTAPRT (89 aa). A compositionally biased stretch (polar residues) spans 165–180; sequence SLPSGFSGTLPGNTQQ. Low complexity-rich tracts occupy residues 181 to 191 and 203 to 217; these read PPSSLSLASAP and QSSASQQPLPASTAP. The interaction with LMNA stretch occupies residues 227–486; sequence QRVPVVLQPH…LALCALVFLC (260 aa). The bHLH domain occupies 317 to 367; that stretch reads EKRTAHNAIEKRYRSSINDKIVELKDLVVGTEAKLNKSAVLRKAIDYIRFL. Residues serine 331 and serine 332 each carry the phosphoserine; by SIK1 modification. Residues 367 to 388 form a leucine-zipper region; the sequence is LQHSNQKLKQENLALRNAAHKS. The residue at position 390 (serine 390) is a Phosphoserine; by AMPK. Residue serine 396 is modified to Phosphoserine; by SIK1. Residues 415–456 are disordered; sequence VVDTLTPPPSDAGSPSQSSPLSLGSRGSSSGGSDSEPDSPVF. A compositionally biased stretch (low complexity) spans 425–454; the sequence is DAGSPSQSSPLSLGSRGSSSGGSDSEPDSP. Serine 449 carries the post-translational modification Phosphoserine. The chain crosses the membrane as a helical span at residues 477–497; the sequence is LALCALVFLCLTCNPLASLFG. Over 498–535 the chain is Lumenal; it reads WGIPGPSSASGAHHSSGRSMLEAESRDGSNWTQWLLPP. Residues 536–556 form a helical membrane-spanning segment; it reads LVWLANGLLVLACLALLFVYG. Topologically, residues 557–1133 are cytoplasmic; the sequence is EPVTRPHTSP…LGGGTTVTSS (577 aa). Serine 1046 carries the post-translational modification Phosphoserine.

Belongs to the SREBP family. As to quaternary structure, efficient DNA binding of the soluble transcription factor fragment requires dimerization with another bHLH protein. Interacts with CEBPA, the interaction produces a transcriptional synergy. Interacts with LMNA. Forms a tight complex with SCAP, the SCAP-SREBP complex, in the endoplasmic reticulum membrane and the Golgi apparatus. Interacts with PAQR3; the interaction anchors the SCAP-SREBP complex to the Golgi apparatus in low cholesterol conditions. Post-translationally, processed in the Golgi apparatus, releasing the protein from the membrane. At low cholesterol the SCAP-SREBP complex is recruited into COPII vesicles for export from the endoplasmic reticulum. In the Golgi, complex SREBPs are cleaved sequentially by site-1 (MBTPS1, S1P) and site-2 (MBTPS2, S2P) proteases. The first cleavage by site-1 protease occurs within the luminal loop, the second cleavage by site-2 protease occurs within the first transmembrane domain, releasing the transcription factor from the Golgi membrane. In terms of processing, phosphorylated by AMPK, leading to suppress protein processing and nuclear translocation, and repress target gene expression. Phosphorylation at Ser-396 by SIK1 represses activity possibly by inhibiting DNA-binding. SCAP-free SREBF1 is ubiquitinated by the BCR(ARMC5) complex, leading to its degradation. Post-translationally, ubiquitinated; the nuclear form has a rapid turnover and is rapidly ubiquitinated and degraded by the proteasome in the nucleus.

Its subcellular location is the endoplasmic reticulum membrane. The protein localises to the golgi apparatus membrane. It is found in the cytoplasmic vesicle. It localises to the COPII-coated vesicle membrane. The protein resides in the nucleus. Its activity is regulated as follows. Activation by cleavage is down-regulated upon activation of SIRT3-dependent PRKAA1/AMPK-alpha signaling cascade which leads to inhibition of ATP-consuming lipogenesis to restore cellular energy balance. Functionally, precursor of the transcription factor form (Processed sterol regulatory element-binding protein 1), which is embedded in the endoplasmic reticulum membrane. Low sterol concentrations promote processing of this form, releasing the transcription factor form that translocates into the nucleus and activates transcription of genes involved in cholesterol biosynthesis and lipid homeostasis. In terms of biological role, key transcription factor that regulates expression of genes involved in cholesterol biosynthesis and lipid homeostasis. Binds to the sterol regulatory element 1 (SRE-1) (5'-ATCACCCCAC-3'). Has dual sequence specificity binding to both an E-box motif (5'-ATCACGTGA-3') and to SRE-1 (5'-ATCACCCCAC-3'). Regulates the promoters of genes involved in cholesterol biosynthesis and the LDL receptor (LDLR) pathway of sterol regulation. This is Sterol regulatory element-binding protein 1 from Cricetulus griseus (Chinese hamster).